The primary structure comprises 476 residues: ATP synthase subunit beta (476 aa).

Position 161-168 (161-168 (GGAGVGKT)) interacts with ATP.

It belongs to the ATPase alpha/beta chains family. F-type ATPases have 2 components, CF(1) - the catalytic core - and CF(0) - the membrane proton channel. CF(1) has five subunits: alpha(3), beta(3), gamma(1), delta(1), epsilon(1). CF(0) has three main subunits: a(1), b(2) and c(9-12). The alpha and beta chains form an alternating ring which encloses part of the gamma chain. CF(1) is attached to CF(0) by a central stalk formed by the gamma and epsilon chains, while a peripheral stalk is formed by the delta and b chains.

The protein resides in the cell membrane. The catalysed reaction is ATP + H2O + 4 H(+)(in) = ADP + phosphate + 5 H(+)(out). Its function is as follows. Produces ATP from ADP in the presence of a proton gradient across the membrane. The catalytic sites are hosted primarily by the beta subunits. In Mycolicibacterium gilvum (strain PYR-GCK) (Mycobacterium gilvum (strain PYR-GCK)), this protein is ATP synthase subunit beta.